Reading from the N-terminus, the 759-residue chain is NADP-dependent malic enzyme (759 aa).

Positions 1 to 428 are malic enzyme; that stretch reads MDEQLKQSAL…KLTEFVYKTN (428 aa). Tyr39 (proton donor) is an active-site residue. The active-site Proton acceptor is Lys94. The a divalent metal cation site is built by Glu136, Asp137, and Asp162. NADP(+) is bound by residues 195–198, Asn288, and Asn320; that span reads AGAA. Residues 429–759 form a phosphate acetyltransferase region; sequence LFMKPIFSQA…AVVEAQTTPL (331 aa).

In the N-terminal section; belongs to the malic enzymes family. This sequence in the C-terminal section; belongs to the phosphate acetyltransferase and butyryltransferase family. Requires Mg(2+) as cofactor. It depends on Mn(2+) as a cofactor.

The catalysed reaction is (S)-malate + NADP(+) = pyruvate + CO2 + NADPH. The enzyme catalyses oxaloacetate + H(+) = pyruvate + CO2. This Salmonella typhimurium (strain LT2 / SGSC1412 / ATCC 700720) protein is NADP-dependent malic enzyme (maeB).